We begin with the raw amino-acid sequence, 687 residues long: MSIRYPLLNRELGILGFNERVLAQAADPAVPLLERLRFICITSSNLDEFFEVRMAGLQEQMRDNPGALSPDGMSLQHVYDLVVERAQKLVHRQYTMLHDTVLTALEAEGIYFHGTEAWNEAQTEWARNYFFDELLPVLTPIGLDPAHPFPRVLNKSLNFVVELEGKDAFGRQAMMGIVQAPRALPRLVRMPQELSGYPHGFVLLSSLLQRFVGELFPNLVVRSCNQFRITRNSELFVDEDEITNLRVALQGELPARHLGNAVRLEVSAETPTHVVRRLLDESGLSDKDCYYADGPVNLVRLMQLPEMVDRPDLKFVPHIPAIPAQVANSVSMFDVIDQGDVLLHHPYESFQPVLELLLQAAKDPNVVAIKQTIYRTGTDSPLMDALMQAARNGKEVTVVVELLARFDEETNINWASQLEAVGAHVVYGVVGHKCHAKMMLIVRRVSVGGKTTLKRYVHLGTGNYHPRTARLYTDFGLMTADQKICEDVHHVFQQLTGIGGELKLHELWQSPFTLHPKLVEAIRAEAEHARAGKKARIVAKMNALLEPTVIAELYEAAQAGVKIDLIVRGVCSLQPGVAGLSENITVRSIVGRFLEHHRIFYFYDGGKEQVYLSSADWMDRNFFRRVEVAFPINNRRLKRRVIAEGLSAFLGDNQSAWLMQSDGHYRRRRPGKSSRNAQMSLLGKFCS.

Residue asparagine 45 participates in ATP binding. Mg(2+) contacts are provided by arginine 375 and arginine 405. The active-site Phosphohistidine intermediate is the histidine 435. Tyrosine 472, arginine 568, and histidine 596 together coordinate ATP.

Belongs to the polyphosphate kinase 1 (PPK1) family. It depends on Mg(2+) as a cofactor. In terms of processing, an intermediate of this reaction is the autophosphorylated ppk in which a phosphate is covalently linked to a histidine residue through a N-P bond.

It carries out the reaction [phosphate](n) + ATP = [phosphate](n+1) + ADP. Catalyzes the reversible transfer of the terminal phosphate of ATP to form a long-chain polyphosphate (polyP). In Paraburkholderia phytofirmans (strain DSM 17436 / LMG 22146 / PsJN) (Burkholderia phytofirmans), this protein is Polyphosphate kinase.